Consider the following 284-residue polypeptide: Nucleotide-binding protein SO_3964 (284 aa).

Residue 8-15 (GRSGSGKS) participates in ATP binding. Position 56 to 59 (56 to 59 (DVRN)) interacts with GTP.

The protein belongs to the RapZ-like family.

Its function is as follows. Displays ATPase and GTPase activities. This chain is Nucleotide-binding protein SO_3964, found in Shewanella oneidensis (strain ATCC 700550 / JCM 31522 / CIP 106686 / LMG 19005 / NCIMB 14063 / MR-1).